Consider the following 268-residue polypeptide: MSAALFSLDSPVRGTPWPTEPAAFYEPGRVDKPGRGPEPGDLGELGSTTPAMYDDESAIDFSAYIDSMAAVPTLELCHDELFADLFNSNHKAAGAGGLELLQGGPTRPPGVGSVARGPLKREPDWGDGDAPGSLLPAQVAVCAQTVVSLAAAAQPTPPTSPEPPRGSPGPSLAPGTVREKGAGKRGPDRGSPEYRQRRERNNIAVRKSRDKAKRRNQEMQQKLVELSAENEKLHQRVEQLTRDLAGLRQFFKKLPSPPFLPPTGADCR.

Disordered stretches follow at residues 1-48 (MSAA…LGST), 97-132 (GLEL…DAPG), and 152-219 (AAQP…NQEM). An N-acetylserine modification is found at Ser2. A Glycyl lysine isopeptide (Lys-Gly) (interchain with G-Cter in SUMO) cross-link involves residue Lys120. The segment covering 155 to 167 (PTPPTSPEPPRGS) has biased composition (pro residues). Over residues 177–201 (VREKGAGKRGPDRGSPEYRQRRERN) the composition is skewed to basic and acidic residues. The region spanning 191 to 254 (SPEYRQRRER…AGLRQFFKKL (64 aa)) is the bZIP domain. A basic motif region spans residues 195–222 (RQRRERNNIAVRKSRDKAKRRNQEMQQK). Residues 226 to 254 (LSAENEKLHQRVEQLTRDLAGLRQFFKKL) form a leucine-zipper region.

This sequence belongs to the bZIP family. C/EBP subfamily. Binds DNA as a homodimer and as a heterodimer. Can form stable heterodimers with CEBPA, CEBPB and CEBPE. Directly interacts with SPI1/PU.1; this interaction does not affect DNA-binding properties of each partner. Interacts with PRDM16.

The protein resides in the nucleus. Transcription activator that recognizes two different DNA motifs: the CCAAT homology common to many promoters and the enhanced core homology common to many enhancers. Important transcription factor regulating the expression of genes involved in immune and inflammatory responses. Transcriptional activator that enhances IL6 transcription alone and as heterodimer with CEBPB. This Mus musculus (Mouse) protein is CCAAT/enhancer-binding protein delta (Cebpd).